A 190-amino-acid chain; its full sequence is Large ribosomal subunit protein bL17 (190 aa).

Residues 128–190 (KKTAGRKAAQ…VEENNEQNKA (63 aa)) are disordered. A compositionally biased stretch (low complexity) spans 143 to 154 (ALAPAEETPAPT). Residues 179–190 (LAVEENNEQNKA) are compositionally biased toward acidic residues.

This sequence belongs to the bacterial ribosomal protein bL17 family. As to quaternary structure, part of the 50S ribosomal subunit. Contacts protein L32.

This Salinispora tropica (strain ATCC BAA-916 / DSM 44818 / JCM 13857 / NBRC 105044 / CNB-440) protein is Large ribosomal subunit protein bL17.